A 317-amino-acid chain; its full sequence is Putative 2-hydroxyacid dehydrogenase SERP1888 (317 aa).

NAD(+) is bound by residues 155-156 (EI), 234-236 (AGR), and Asp-260. Arg-236 is an active-site residue. Glu-265 is an active-site residue. Residue His-283 is the Proton donor of the active site. 283–286 (HIGN) contributes to the NAD(+) binding site.

This sequence belongs to the D-isomer specific 2-hydroxyacid dehydrogenase family.

This Staphylococcus epidermidis (strain ATCC 35984 / DSM 28319 / BCRC 17069 / CCUG 31568 / BM 3577 / RP62A) protein is Putative 2-hydroxyacid dehydrogenase SERP1888.